We begin with the raw amino-acid sequence, 264 residues long: Thiazole synthase (264 aa).

The active-site Schiff-base intermediate with DXP is the Lys106. Residues Gly167, 193 to 194 (AG), and 215 to 216 (NT) contribute to the 1-deoxy-D-xylulose 5-phosphate site.

It belongs to the ThiG family. As to quaternary structure, homotetramer. Forms heterodimers with either ThiH or ThiS.

Its subcellular location is the cytoplasm. The catalysed reaction is [ThiS sulfur-carrier protein]-C-terminal-Gly-aminoethanethioate + 2-iminoacetate + 1-deoxy-D-xylulose 5-phosphate = [ThiS sulfur-carrier protein]-C-terminal Gly-Gly + 2-[(2R,5Z)-2-carboxy-4-methylthiazol-5(2H)-ylidene]ethyl phosphate + 2 H2O + H(+). It functions in the pathway cofactor biosynthesis; thiamine diphosphate biosynthesis. Its function is as follows. Catalyzes the rearrangement of 1-deoxy-D-xylulose 5-phosphate (DXP) to produce the thiazole phosphate moiety of thiamine. Sulfur is provided by the thiocarboxylate moiety of the carrier protein ThiS. In vitro, sulfur can be provided by H(2)S. This chain is Thiazole synthase, found in Xanthomonas campestris pv. campestris (strain 8004).